Here is a 775-residue protein sequence, read N- to C-terminus: Hepatocyte growth factor-regulated tyrosine kinase substrate (775 aa).

A VHS domain is found at 15 to 143 (ATSQLLLETD…IMKVEGHVFP (129 aa)). The FYVE-type zinc finger occupies 160–220 (WVDAEECHRC…VCEPCYEQLN (61 aa)). Positions 166, 169, 182, 185, 190, and 193 each coordinate Zn(2+). N6-acetyllysine is present on K207. Positions 212 and 215 each coordinate Zn(2+). Y216 is subject to Phosphotyrosine. A disordered region spans residues 223–319 (AEGKASSTTE…SPVNSSAPLA (97 aa)). An interaction with SNX1 region spans residues 225–541 (GKASSTTELP…QRLQEQEKER (317 aa)). The region spanning 258-277 (QEEEELQLALALSQSEAEEK) is the UIM domain. Positions 307 to 316 (LYSSPVNSSA) are enriched in polar residues. Phosphotyrosine is present on residues Y308, Y329, and Y334. Residues 338 to 405 (KQEEARKSPT…NGESEESHEQ (68 aa)) form a disordered region. The tract at residues 443-541 (SINTMHPQLL…QRLQEQEKER (99 aa)) is interaction with SNAP25 and TRAK2. The segment at 452–570 (LELLNQLDER…FPLPYAQLQA (119 aa)) is interaction with STAM. An interaction with NF2 region spans residues 478–775 (ARGALSALRE…GSEAQLISFD (298 aa)). K549 is modified (N6-succinyllysine). Positions 640 to 657 (PGAQAAPQAQAGPTTSPA) are enriched in low complexity. 2 disordered regions span residues 640 to 690 (PGAQ…PQTS) and 719 to 775 (QDAS…ISFD). The span at 658–690 (YSSYQPTPTPGYQSVASQAPQSLPAISQPPQTS) shows a compositional bias: polar residues. The segment covering 744–761 (TGPPQQQPPVAQPAPTQG) has biased composition (pro residues).

As to quaternary structure, component of the ESCRT-0 complex composed of STAM or STAM2 and HGS. Part of a complex at least composed of HSG, STAM2 (or probably STAM) and EPS15. Interacts with STAM. Interacts with STAM2. Interacts with EPS15; the interaction is direct, calcium-dependent and inhibited by SNAP25. Identified in a complex with STAM and LITAF. Found in a complex with STAM and E3 ligase ITCH and DTX3L. Interacts with E3 ligase DTX3L; the interaction brings together STAM and HSG, promotes their recruitment to early endosomes and decreases STAM and HGS ubiquitination by ITCH. Interacts with NF2; the interaction is direct. Interacts with ubiquitin; the interaction is direct. Interacts with VPS37C. Interacts with SMAD1, SMAD2 and SMAD3. Interacts with TSG101; the interaction mediates the association with the ESCRT-I complex. Interacts with SNAP25; the interaction is direct and decreases with addition of increasing concentrations of free calcium. Interacts with SNX1; the interaction is direct. Component of a 550 kDa membrane complex at least composed of HGS and SNX1 but excluding EGFR. Interacts with TRAK1. Interacts with TRAK2. Component of the CART complex, at least composed of ACTN4, HGS/HRS, MYO5B and TRIM3. Interacts with ARRDC3. Identified in a complex containing at least ARRDC4, AVPR2 and HGS. Interacts (via UIM domain) with UBQLN1 (via ubiquitin-like domain). Interacts with LAPTM4B; promotes HGS ubiquitination. In terms of processing, phosphorylated on Tyr-334. This phosphorylation occurs in response to EGF. A minor site of phosphorylation on Tyr-329 is detected. Protein phosphorylation may also be triggered in response to IL-2, GM-CSF and HGF. Post-translationally, ubiquitinated by ITCH. As to expression, ubiquitous expression in adult and fetal tissues with higher expression in testis.

It is found in the cytoplasm. The protein localises to the early endosome membrane. Its subcellular location is the endosome. It localises to the multivesicular body membrane. Involved in intracellular signal transduction mediated by cytokines and growth factors. When associated with STAM, it suppresses DNA signaling upon stimulation by IL-2 and GM-CSF. Could be a direct effector of PI3-kinase in vesicular pathway via early endosomes and may regulate trafficking to early and late endosomes by recruiting clathrin. May concentrate ubiquitinated receptors within clathrin-coated regions. Involved in down-regulation of receptor tyrosine kinase via multivesicular body (MVBs) when complexed with STAM (ESCRT-0 complex). The ESCRT-0 complex binds ubiquitin and acts as a sorting machinery that recognizes ubiquitinated receptors and transfers them to further sequential lysosomal sorting/trafficking processes. May contribute to the efficient recruitment of SMADs to the activin receptor complex. Involved in receptor recycling via its association with the CART complex, a multiprotein complex required for efficient transferrin receptor recycling but not for EGFR degradation. The polypeptide is Hepatocyte growth factor-regulated tyrosine kinase substrate (Hgs) (Mus musculus (Mouse)).